Reading from the N-terminus, the 544-residue chain is MAELTIKPEEIRAALDSFVNSYEPSASAREEVGRVTLAADGIAEVEGLPGAMANELLQFEDGTLGLALNLDVRHIGVVVLGEFTGIEEGQEVRRTGEVLSVPVGDGYLGRVVDPLGNPIDGLGDVETEGRRALELQAPGVMARKSVHEPLQTGIKAIDSMIPIGRGQRQLIIGDRQTGKTAIAIDTILNQKANWDSGDPSKQVRCVYVAIGQKGSTIASVRGALEDAGALEYTTIVAAPASDPAGFKYLAPYTGSAIGQHWMYQGKHVLIVFDDLSKQAEAYRAVSLLLRRPPGREAYPGDVFYLHSRLLERCAKLSDELGAGSMTGLPIIETKANDVSAYIPTNVISITDGQIFLQSDLFNANQRPAVDVGISVSRVGGDAQVKGMKKVSGTLKLELAQYRSLEAFAMFASDLDAASRAQLKRGAALTELLKQPQYSPFAVEDQVAMIWSGTNGYLDDVETADIHRFESELLDHLRRHTSVLDDIASSGLLTDETEEALRNGVESFRRTFAGSDGQIIGGGEPESDGEDVDVEQEQIVRQKRG.

Residue 173 to 180 (GDRQTGKT) participates in ATP binding. The segment at 513–544 (GSDGQIIGGGEPESDGEDVDVEQEQIVRQKRG) is disordered. Residues 524 to 535 (PESDGEDVDVEQ) show a composition bias toward acidic residues.

Belongs to the ATPase alpha/beta chains family. As to quaternary structure, F-type ATPases have 2 components, CF(1) - the catalytic core - and CF(0) - the membrane proton channel. CF(1) has five subunits: alpha(3), beta(3), gamma(1), delta(1), epsilon(1). CF(0) has three main subunits: a(1), b(2) and c(9-12). The alpha and beta chains form an alternating ring which encloses part of the gamma chain. CF(1) is attached to CF(0) by a central stalk formed by the gamma and epsilon chains, while a peripheral stalk is formed by the delta and b chains.

The protein localises to the cell membrane. It catalyses the reaction ATP + H2O + 4 H(+)(in) = ADP + phosphate + 5 H(+)(out). In terms of biological role, produces ATP from ADP in the presence of a proton gradient across the membrane. The alpha chain is a regulatory subunit. The sequence is that of ATP synthase subunit alpha from Beutenbergia cavernae (strain ATCC BAA-8 / DSM 12333 / CCUG 43141 / JCM 11478 / NBRC 16432 / NCIMB 13614 / HKI 0122).